A 150-amino-acid chain; its full sequence is Large ribosomal subunit protein uL13 (150 aa).

This sequence belongs to the universal ribosomal protein uL13 family. As to quaternary structure, part of the 50S ribosomal subunit.

This protein is one of the early assembly proteins of the 50S ribosomal subunit, although it is not seen to bind rRNA by itself. It is important during the early stages of 50S assembly. The chain is Large ribosomal subunit protein uL13 from Sulfurihydrogenibium sp. (strain YO3AOP1).